A 396-amino-acid chain; its full sequence is Putative glycosyltransferase HOC1 (396 aa).

Residues 2–13 lie on the Cytoplasmic side of the membrane; it reads AKTTKRASSFRR. Residues 14–34 form a helical; Signal-anchor for type II membrane protein membrane-spanning segment; that stretch reads LMIFAIIALISLAFGVRYLFH. The Lumenal portion of the chain corresponds to 35–396; the sequence is NSNATDLQKI…WKNTPKVEQK (362 aa). N-linked (GlcNAc...) asparagine glycosylation occurs at Asn-37.

The protein belongs to the glycosyltransferase 32 family. As to quaternary structure, component of the M-Pol II complex composed of ANP1, MNN9, MNN10, MNN11 and HOC1.

The protein localises to the golgi apparatus. Its subcellular location is the cis-Golgi network membrane. Functionally, the M-Pol II complex possesses alpha-1,6-mannosyltransferase activity and is probably involved in the elongation of the mannan backbone of N-linked glycans on cell wall and periplasmic proteins. In Saccharomyces cerevisiae (strain ATCC 204508 / S288c) (Baker's yeast), this protein is Putative glycosyltransferase HOC1 (HOC1).